Here is a 445-residue protein sequence, read N- to C-terminus: Tubulin beta-1 chain (445 aa).

An MREI motif motif is present at residues 1 to 4; that stretch reads MREI. GTP-binding residues include Q11, E69, S138, G142, T143, G144, N204, and N226. E69 is a binding site for Mg(2+). A disordered region spans residues 425–445; it reads YQDATAEEEGEFEEEGEEELA. A compositionally biased stretch (acidic residues) spans 429–445; it reads TAEEEGEFEEEGEEELA. E438 is subject to 5-glutamyl polyglutamate.

This sequence belongs to the tubulin family. As to quaternary structure, dimer of alpha and beta chains. A typical microtubule is a hollow water-filled tube with an outer diameter of 25 nm and an inner diameter of 15 nM. Alpha-beta heterodimers associate head-to-tail to form protofilaments running lengthwise along the microtubule wall with the beta-tubulin subunit facing the microtubule plus end conferring a structural polarity. Microtubules usually have 13 protofilaments but different protofilament numbers can be found in some organisms and specialized cells. The cofactor is Mg(2+). Post-translationally, some glutamate residues at the C-terminus are polyglycylated, resulting in polyglycine chains on the gamma-carboxyl group. Glycylation is mainly limited to tubulin incorporated into axonemes (cilia and flagella) whereas glutamylation is prevalent in neuronal cells, centrioles, axonemes, and the mitotic spindle. Both modifications can coexist on the same protein on adjacent residues, and lowering polyglycylation levels increases polyglutamylation, and reciprocally. The precise function of polyglycylation is still unclear. In terms of processing, some glutamate residues at the C-terminus are polyglutamylated, resulting in polyglutamate chains on the gamma-carboxyl group. Polyglutamylation plays a key role in microtubule severing by spastin (SPAST). SPAST preferentially recognizes and acts on microtubules decorated with short polyglutamate tails: severing activity by SPAST increases as the number of glutamates per tubulin rises from one to eight, but decreases beyond this glutamylation threshold.

The protein resides in the cytoplasm. Its subcellular location is the cytoskeleton. Tubulin is the major constituent of microtubules, a cylinder consisting of laterally associated linear protofilaments composed of alpha- and beta-tubulin heterodimers. Microtubules grow by the addition of GTP-tubulin dimers to the microtubule end, where a stabilizing cap forms. Below the cap, tubulin dimers are in GDP-bound state, owing to GTPase activity of alpha-tubulin. The polypeptide is Tubulin beta-1 chain (Gadus morhua (Atlantic cod)).